Reading from the N-terminus, the 1053-residue chain is Zinc finger and BTB domain-containing protein 11 (1053 aa).

The segment covering 141 to 156 (LDLESGEESNESEDDL) has biased composition (acidic residues). Residues 141 to 173 (LDLESGEESNESEDDLSNFTSSPTTASKPAKKK) form a disordered region. Residues 157 to 168 (SNFTSSPTTASK) are compositionally biased toward low complexity. The BTB domain occupies 214–282 (CDVTLLIEGE…AYTSVLSFDF (69 aa)). The disordered stretch occupies residues 546 to 566 (LVQRGKKMKQPKRDAKENTEE). Positions 556-566 (PKRDAKENTEE) are enriched in basic and acidic residues. C2H2-type zinc fingers lie at residues 569–591 (HKCG…KLKH) and 597–619 (YKCP…LIRH). Residues 619-643 (HTRKDAPSSSSSNSTSNEASGTSSE) are disordered. A compositionally biased stretch (low complexity) spans 626–642 (SSSSSNSTSNEASGTSS). 10 consecutive C2H2-type zinc fingers follow at residues 651 to 673 (FICS…MLKH), 679 to 701 (HACQ…QSLH), 707 to 729 (FQCE…MSIH), 735 to 757 (YLCS…FKKH), 766 to 788 (YHCT…MNKH), 794 to 816 (FQCQ…VKSH), 822 to 846 (YRCN…KATH), 858 to 880 (RVCE…MNNH), 886 to 908 (FECL…VRTH), and 914 to 937 (YVCP…TKFH). Lys-1043 is covalently cross-linked (Glycyl lysine isopeptide (Lys-Gly) (interchain with G-Cter in SUMO2)). Ser-1050 is modified (phosphoserine).

Its subcellular location is the nucleus. The protein localises to the nucleolus. In terms of biological role, may be involved in transcriptional regulation. This is Zinc finger and BTB domain-containing protein 11 from Homo sapiens (Human).